Reading from the N-terminus, the 369-residue chain is Histidine decarboxylase (369 aa).

A substrate-binding site is contributed by His119. Lys230 bears the N6-(pyridoxal phosphate)lysine mark.

Belongs to the group II decarboxylase family. Homotetramer. It depends on pyridoxal 5'-phosphate as a cofactor.

The catalysed reaction is L-histidine + H(+) = histamine + CO2. The protein is Histidine decarboxylase of Mesorhizobium japonicum (strain LMG 29417 / CECT 9101 / MAFF 303099) (Mesorhizobium loti (strain MAFF 303099)).